Consider the following 366-residue polypeptide: Chorismate synthase (366 aa).

Residue Arg-48 participates in NADP(+) binding. FMN is bound by residues 125-127 (RSS), 238-239 (NA), Gly-278, 293-297 (KPTSS), and Arg-319.

Belongs to the chorismate synthase family. Homotetramer. It depends on FMNH2 as a cofactor.

It carries out the reaction 5-O-(1-carboxyvinyl)-3-phosphoshikimate = chorismate + phosphate. Its pathway is metabolic intermediate biosynthesis; chorismate biosynthesis; chorismate from D-erythrose 4-phosphate and phosphoenolpyruvate: step 7/7. Its function is as follows. Catalyzes the anti-1,4-elimination of the C-3 phosphate and the C-6 proR hydrogen from 5-enolpyruvylshikimate-3-phosphate (EPSP) to yield chorismate, which is the branch point compound that serves as the starting substrate for the three terminal pathways of aromatic amino acid biosynthesis. This reaction introduces a second double bond into the aromatic ring system. In Hydrogenovibrio crunogenus (strain DSM 25203 / XCL-2) (Thiomicrospira crunogena), this protein is Chorismate synthase.